The primary structure comprises 300 residues: Phosphatidylglycerol--prolipoprotein diacylglyceryl transferase (300 aa).

A run of 7 helical transmembrane segments spans residues 17–37 (LAIRWYGLMYLAAFIMFLWFG), 59–79 (MLFYGVLGVILGGRLGYVLFY), 94–114 (VWEGGMAFHGGFLGVVVAMML), 129–149 (FIAPMVPCGLAAGRLGNFING), 204–224 (SQIYQFLGEGVLFFILLWLYA), 230–250 (MGAVSGAFLLGYGVFRFAAEF), and 265–285 (LSMGQWLSLPMILIGIAMLVW). Arg-142 serves as a coordination point for a 1,2-diacyl-sn-glycero-3-phospho-(1'-sn-glycerol).

This sequence belongs to the Lgt family.

Its subcellular location is the cell inner membrane. It carries out the reaction L-cysteinyl-[prolipoprotein] + a 1,2-diacyl-sn-glycero-3-phospho-(1'-sn-glycerol) = an S-1,2-diacyl-sn-glyceryl-L-cysteinyl-[prolipoprotein] + sn-glycerol 1-phosphate + H(+). It participates in protein modification; lipoprotein biosynthesis (diacylglyceryl transfer). Functionally, catalyzes the transfer of the diacylglyceryl group from phosphatidylglycerol to the sulfhydryl group of the N-terminal cysteine of a prolipoprotein, the first step in the formation of mature lipoproteins. In Ralstonia pickettii (strain 12J), this protein is Phosphatidylglycerol--prolipoprotein diacylglyceryl transferase.